The chain runs to 150 residues: Large ribosomal subunit protein eL19 (150 aa).

The disordered stretch occupies residues 55-89 (IKGQSRYRAKIRHEQKKKGRHRGPGSRKGKKTARM).

It belongs to the eukaryotic ribosomal protein eL19 family. Part of the 50S ribosomal subunit.

Its function is as follows. Binds to the 23S rRNA. This Pyrococcus furiosus (strain ATCC 43587 / DSM 3638 / JCM 8422 / Vc1) protein is Large ribosomal subunit protein eL19.